Consider the following 556-residue polypeptide: Arginine--tRNA ligase (556 aa).

The 'HIGH' region motif lies at Ala-132–His-142.

It belongs to the class-I aminoacyl-tRNA synthetase family. Monomer.

The protein localises to the cytoplasm. The enzyme catalyses tRNA(Arg) + L-arginine + ATP = L-arginyl-tRNA(Arg) + AMP + diphosphate. The polypeptide is Arginine--tRNA ligase (Bacillus cereus (strain ATCC 10987 / NRS 248)).